A 284-amino-acid chain; its full sequence is Probable O-methyltransferase ustE (284 aa).

Residues N22 and N29 are each glycosylated (N-linked (GlcNAc...) asparagine). Helical transmembrane passes span 88–108 (LLLL…VLTV) and 157–177 (YLAT…VCEI). N205 is a glycosylation site (N-linked (GlcNAc...) asparagine). A helical transmembrane segment spans residues 215 to 235 (GLALASGGMIYGMSIAMFFMW). N264 is a glycosylation site (N-linked (GlcNAc...) asparagine).

The protein belongs to the class VI-like SAM-binding methyltransferase superfamily. Isoprenylcysteine carboxyl methyltransferase family.

Its subcellular location is the membrane. It functions in the pathway secondary metabolite biosynthesis. Probable O-methyltransferase; part of the gene cluster that mediates the biosynthesis of ustilaginoidins, dimeric gamma-naphthopyrones isolated from different fungal species. The first step in the biosynthesis of ustilaginoidins is the production of gamma-naphthopyrone precursor YWA1 by the non-reducing polyketide synthase ustP, via condensation of one acetyl-CoA starter unit with 6 malonyl-CoA units. YWA1 is then probably substrate of the ustZ to yield norrubrofusarin via a dehydration reaction. A key enzyme in the biosynthetic pathway is the laccase ustL, which catalyzes the oxidative dimerization of norrubrofusarin to ustilaginoidin A. It can produce the M- and P-atropisomers in varying amounts, depending on the reaction conditions. For the biosynthesis of 3-methylustilaginoid in derivatives such as chaetochromin A, a methylated derivative of YWA1 is required. The C-methylation is considered to be catalyzed by ustM, the phosphopantetheine attachment site of which indicates that it acts on the growing polyketide chain before release of the product. For the biosynthesis of chaetochromin A, it is assumed that saturation of the D2 double bond takes place before dimerization, and is probably catalyzed by an external reductase because no candidate gene was identified within the cluster. The protein is Probable O-methyltransferase ustE of Ustilaginoidea virens (Rice false smut fungus).